Reading from the N-terminus, the 156-residue chain is Small ribosomal subunit protein uS7 (156 aa).

The protein belongs to the universal ribosomal protein uS7 family. Part of the 30S ribosomal subunit. Contacts proteins S9 and S11.

In terms of biological role, one of the primary rRNA binding proteins, it binds directly to 16S rRNA where it nucleates assembly of the head domain of the 30S subunit. Is located at the subunit interface close to the decoding center, probably blocks exit of the E-site tRNA. This Klebsiella pneumoniae subsp. pneumoniae (strain ATCC 700721 / MGH 78578) protein is Small ribosomal subunit protein uS7.